The following is a 143-amino-acid chain: NADH-quinone oxidoreductase subunit A (143 aa).

3 consecutive transmembrane segments (helical) span residues 8–28 (FGNVFVFFLLGVVFVAGGYLT), 63–83 (FYVVALIFIIFDVEVVFLFPW), and 93–113 (FALVEALVFAGILILGLVYAW).

Belongs to the complex I subunit 3 family. In terms of assembly, NDH-1 is composed of 14 different subunits. Subunits NuoA, H, J, K, L, M, N constitute the membrane sector of the complex.

The protein localises to the cell inner membrane. It carries out the reaction a quinone + NADH + 5 H(+)(in) = a quinol + NAD(+) + 4 H(+)(out). NDH-1 shuttles electrons from NADH, via FMN and iron-sulfur (Fe-S) centers, to quinones in the respiratory chain. The immediate electron acceptor for the enzyme in this species is believed to be a menaquinone. Couples the redox reaction to proton translocation (for every two electrons transferred, four hydrogen ions are translocated across the cytoplasmic membrane), and thus conserves the redox energy in a proton gradient. This is NADH-quinone oxidoreductase subunit A from Chlorobium phaeovibrioides (strain DSM 265 / 1930) (Prosthecochloris vibrioformis (strain DSM 265)).